Here is a 651-residue protein sequence, read N- to C-terminus: Endoplasmic reticulum chaperone BiP (651 aa).

The signal sequence occupies residues 1–20 (MGLSTYVGIFLLCILTLSRC). ATP is bound by residues 36–39 (GTTY), Lys-96, 226–228 (GGT), 292–299 (EKAKRTLS), and 363–366 (GSTR). Residues 125–279 (KPYMKVQVGS…KKKEGKDITK (155 aa)) form a nucleotide-binding (NBD) region. The segment at 399-499 (VQAGVISGVE…PRGLPQIEVT (101 aa)) is substrate-binding (SBD). The Prevents secretion from ER signature appears at 648 to 651 (KEEL).

The protein belongs to the heat shock protein 70 family.

The protein localises to the endoplasmic reticulum lumen. The catalysed reaction is ATP + H2O = ADP + phosphate + H(+). Its activity is regulated as follows. The chaperone activity is regulated by ATP-induced allosteric coupling of the nucleotide-binding (NBD) and substrate-binding (SBD) domains. In the ADP-bound and nucleotide-free (apo) states, the two domains have little interaction. In contrast, in the ATP-bound state the two domains are tightly coupled, which results in drastically accelerated kinetics in both binding and release of polypeptide substrates. J domain-containing co-chaperones stimulate the ATPase activity and are required for efficient substrate recognition. In terms of biological role, endoplasmic reticulum chaperone that plays a key role in protein folding and quality control in the endoplasmic reticulum lumen. Involved in the correct folding of proteins and degradation of misfolded proteins. Acts as a key repressor of the unfolded protein response (UPR). This chain is Endoplasmic reticulum chaperone BiP, found in Echinococcus granulosus (Hydatid tapeworm).